The primary structure comprises 240 residues: 7-cyano-7-deazaguanine synthase (240 aa).

Residue 18 to 28 (FSGGQDSTTCL) coordinates ATP. Residues Cys197, Cys206, Cys209, and Cys212 each contribute to the Zn(2+) site.

It belongs to the QueC family. Requires Zn(2+) as cofactor.

The enzyme catalyses 7-carboxy-7-deazaguanine + NH4(+) + ATP = 7-cyano-7-deazaguanine + ADP + phosphate + H2O + H(+). Its pathway is purine metabolism; 7-cyano-7-deazaguanine biosynthesis. Functionally, catalyzes the ATP-dependent conversion of 7-carboxy-7-deazaguanine (CDG) to 7-cyano-7-deazaguanine (preQ(0)). The protein is 7-cyano-7-deazaguanine synthase of Shewanella putrefaciens (strain CN-32 / ATCC BAA-453).